The following is a 338-amino-acid chain: MIKVAINGYGRIGRSILRALYESGKRDQIQIVAINELANPEAMLHLTQYDTTHGRFQSPASLDANVMTIGDDRIQLLHEADAEKLPWRSLDIDIVFEATGALIDRQACEAHIRAGAKQVLISHPSSGDVDATIVYGVNHQDLKAEHKVVSNASCTTNCLVPIIQVLDRAFKVRSGAITTIHSAMNDQQVIDAYHDDLRRTRAAGQSIIPVDTKLARGIERILPEMKDKFEAISVRVPTINVTAIDLSVTLDKRVDIDTVNQVLSQAANGSYQGVVGYTNAPLVSCDFNHDPRSSIVDGTQTRVSDGHLVKLLLWCDNEWGFANRMLDTSLEMIKAVRA.

11–12 (RI) serves as a coordination point for NAD(+). Substrate contacts are provided by residues 153 to 155 (SCT), Arg199, 212 to 213 (TK), and Arg235. Cys154 serves as the catalytic Nucleophile. Asn317 serves as a coordination point for NAD(+).

This sequence belongs to the glyceraldehyde-3-phosphate dehydrogenase family. Epd subfamily. As to quaternary structure, homotetramer.

The protein resides in the cytoplasm. The catalysed reaction is D-erythrose 4-phosphate + NAD(+) + H2O = 4-phospho-D-erythronate + NADH + 2 H(+). It functions in the pathway cofactor biosynthesis; pyridoxine 5'-phosphate biosynthesis; pyridoxine 5'-phosphate from D-erythrose 4-phosphate: step 1/5. Functionally, catalyzes the NAD-dependent conversion of D-erythrose 4-phosphate to 4-phosphoerythronate. This Shewanella loihica (strain ATCC BAA-1088 / PV-4) protein is D-erythrose-4-phosphate dehydrogenase.